We begin with the raw amino-acid sequence, 691 residues long: Protein-glutamine gamma-glutamyltransferase E (691 aa).

Tyrosine 110 bears the Phosphotyrosine mark. Residue threonine 111 is modified to Phosphothreonine. Residues alanine 221, asparagine 224, asparagine 226, and aspartate 227 each coordinate Ca(2+). The active site involves cysteine 272. Residues aspartate 301, aspartate 303, asparagine 305, serine 307, and aspartate 324 each coordinate Ca(2+). Catalysis depends on residues histidine 330 and aspartate 353. Residues asparagine 393, threonine 414, glutamate 442, and glutamate 447 each coordinate Ca(2+).

The protein belongs to the transglutaminase superfamily. Transglutaminase family. As to quaternary structure, consists of two polypeptide chains, which are synthesized as a precursor form of a single polypeptide. Ca(2+) is required as a cofactor. Activated by proteolytic processing. In vitro activation is commonly achieved by cleavage with dispase, a neutral bacterial protease. Physiological activation may be catalyzed by CTSL and, to a lesser extent, by CTSS.

The protein resides in the cytoplasm. It catalyses the reaction L-glutaminyl-[protein] + L-lysyl-[protein] = [protein]-L-lysyl-N(6)-5-L-glutamyl-[protein] + NH4(+). Its function is as follows. Catalyzes the calcium-dependent formation of isopeptide cross-links between glutamine and lysine residues in various proteins, as well as the conjugation of polyamines to proteins. Involved in the formation of the cornified envelope (CE), a specialized component consisting of covalent cross-links of proteins beneath the plasma membrane of terminally differentiated keratinocytes. Catalyzes small proline-rich proteins and LOR cross-linking to form small interchain oligomers, which are further cross-linked by TGM1 onto the growing CE scaffold. In hair follicles, involved in cross-linking structural proteins to hardening the inner root sheath. This is Protein-glutamine gamma-glutamyltransferase E (TGM3) from Bos taurus (Bovine).